Consider the following 152-residue polypeptide: ESAT-6 secretion machinery protein EssA (152 aa).

At 1-114 the chain is on the cytoplasmic side; it reads MLMNSVIALT…PYIQNKQEKK (114 aa). Positions 62-83 are disordered; it reads ERQQQIKNDMFQNQASHSTRLN. Residues 66–80 are compositionally biased toward polar residues; the sequence is QIKNDMFQNQASHST. The chain crosses the membrane as a helical span at residues 115 to 135; sequence IFPYILMSVGAFLTLGFVIFS. Residues 136 to 152 lie on the Extracellular side of the membrane; that stretch reads IHKGRRTKNESARKSNI.

This sequence belongs to the EssA family.

Its subcellular location is the cell membrane. In terms of biological role, component of the ESAT-6 secretion system (Ess). Required for the secretion of EsxA and EsxB. This is ESAT-6 secretion machinery protein EssA from Staphylococcus aureus (strain COL).